The primary structure comprises 103 residues: Large ribosomal subunit protein bL21 (103 aa).

This sequence belongs to the bacterial ribosomal protein bL21 family. Part of the 50S ribosomal subunit. Contacts protein L20.

Functionally, this protein binds to 23S rRNA in the presence of protein L20. The chain is Large ribosomal subunit protein bL21 from Pectobacterium atrosepticum (strain SCRI 1043 / ATCC BAA-672) (Erwinia carotovora subsp. atroseptica).